A 288-amino-acid chain; its full sequence is Light-independent protochlorophyllide reductase iron-sulfur ATP-binding protein (288 aa).

Residues 10 to 15 (GIGKST) and Lys-39 each bind ATP. Ser-14 lines the Mg(2+) pocket. [4Fe-4S] cluster-binding residues include Cys-95 and Cys-129. Residues 180 to 181 (NR) and 204 to 206 (PLL) each bind ATP.

This sequence belongs to the NifH/BchL/ChlL family. Homodimer. Protochlorophyllide reductase is composed of three subunits; ChlL, ChlN and ChlB. The cofactor is [4Fe-4S] cluster.

It is found in the plastid. The protein localises to the chloroplast. It carries out the reaction chlorophyllide a + oxidized 2[4Fe-4S]-[ferredoxin] + 2 ADP + 2 phosphate = protochlorophyllide a + reduced 2[4Fe-4S]-[ferredoxin] + 2 ATP + 2 H2O. The protein operates within porphyrin-containing compound metabolism; chlorophyll biosynthesis (light-independent). Component of the dark-operative protochlorophyllide reductase (DPOR) that uses Mg-ATP and reduced ferredoxin to reduce ring D of protochlorophyllide (Pchlide) to form chlorophyllide a (Chlide). This reaction is light-independent. The L component serves as a unique electron donor to the NB-component of the complex, and binds Mg-ATP. This chain is Light-independent protochlorophyllide reductase iron-sulfur ATP-binding protein, found in Stigeoclonium helveticum (Green alga).